We begin with the raw amino-acid sequence, 426 residues long: 5-methylthioadenosine/S-adenosylhomocysteine deaminase (426 aa).

Zn(2+) contacts are provided by H60 and H62. 2 residues coordinate substrate: E89 and H179. H206 lines the Zn(2+) pocket. The substrate site is built by E209 and D294. D294 serves as a coordination point for Zn(2+).

The protein belongs to the metallo-dependent hydrolases superfamily. MTA/SAH deaminase family. Zn(2+) serves as cofactor.

It carries out the reaction S-adenosyl-L-homocysteine + H2O + H(+) = S-inosyl-L-homocysteine + NH4(+). The enzyme catalyses S-methyl-5'-thioadenosine + H2O + H(+) = S-methyl-5'-thioinosine + NH4(+). In terms of biological role, catalyzes the deamination of 5-methylthioadenosine and S-adenosyl-L-homocysteine into 5-methylthioinosine and S-inosyl-L-homocysteine, respectively. Is also able to deaminate adenosine. The sequence is that of 5-methylthioadenosine/S-adenosylhomocysteine deaminase from Dictyoglomus thermophilum (strain ATCC 35947 / DSM 3960 / H-6-12).